The following is a 647-amino-acid chain: Putative pre-mRNA-splicing factor ATP-dependent RNA helicase C20H4.09 (647 aa).

The Helicase ATP-binding domain maps to 35–199 (LYAVEQNQIT…FGQDKVCTMS (165 aa)). Position 48 to 55 (48 to 55 (GHTGCGKT)) interacts with ATP. Positions 146–149 (DEVH) match the DEAH box motif. In terms of domain architecture, Helicase C-terminal spans 219 to 398 (YVDSAIETVI…PLVLFLKGLG (180 aa)).

Belongs to the DEAD box helicase family. DEAH subfamily.

It localises to the nucleus. The catalysed reaction is ATP + H2O = ADP + phosphate + H(+). In terms of biological role, pre-mRNA processing factor involved in disassembly of spliceosomes after the release of mature mRNA. This is Putative pre-mRNA-splicing factor ATP-dependent RNA helicase C20H4.09 from Schizosaccharomyces pombe (strain 972 / ATCC 24843) (Fission yeast).